The chain runs to 340 residues: Glucokinase (340 aa).

17–22 (GDIGGT) lines the ATP pocket.

It belongs to the bacterial glucokinase family.

Its subcellular location is the cytoplasm. The catalysed reaction is D-glucose + ATP = D-glucose 6-phosphate + ADP + H(+). The sequence is that of Glucokinase from Agrobacterium fabrum (strain C58 / ATCC 33970) (Agrobacterium tumefaciens (strain C58)).